The chain runs to 212 residues: Putative 3-methyladenine DNA glycosylase (212 aa).

This sequence belongs to the DNA glycosylase MPG family.

In Nocardia farcinica (strain IFM 10152), this protein is Putative 3-methyladenine DNA glycosylase.